The chain runs to 261 residues: UPF0246 protein Reut_A1014 (261 aa).

It belongs to the UPF0246 family.

This Cupriavidus pinatubonensis (strain JMP 134 / LMG 1197) (Cupriavidus necator (strain JMP 134)) protein is UPF0246 protein Reut_A1014.